We begin with the raw amino-acid sequence, 184 residues long: Large ribosomal subunit protein uL6 (184 aa).

The protein belongs to the universal ribosomal protein uL6 family. Part of the 50S ribosomal subunit.

In terms of biological role, this protein binds to the 23S rRNA, and is important in its secondary structure. It is located near the subunit interface in the base of the L7/L12 stalk, and near the tRNA binding site of the peptidyltransferase center. The protein is Large ribosomal subunit protein uL6 of Desulfurococcus amylolyticus (strain DSM 18924 / JCM 16383 / VKM B-2413 / 1221n) (Desulfurococcus kamchatkensis).